We begin with the raw amino-acid sequence, 392 residues long: uncharacterized protein (392 aa).

Belongs to the peptidase M24 family.

This is an uncharacterized protein from Sinorhizobium fredii (strain NBRC 101917 / NGR234).